Consider the following 237-residue polypeptide: Ribonuclease PH (237 aa).

Residues R86 and 124 to 126 contribute to the phosphate site; that span reads GTR.

This sequence belongs to the RNase PH family. Homohexameric ring arranged as a trimer of dimers.

It carries out the reaction tRNA(n+1) + phosphate = tRNA(n) + a ribonucleoside 5'-diphosphate. In terms of biological role, phosphorolytic 3'-5' exoribonuclease that plays an important role in tRNA 3'-end maturation. Removes nucleotide residues following the 3'-CCA terminus of tRNAs; can also add nucleotides to the ends of RNA molecules by using nucleoside diphosphates as substrates, but this may not be physiologically important. Probably plays a role in initiation of 16S rRNA degradation (leading to ribosome degradation) during starvation. In Methylobacterium sp. (strain 4-46), this protein is Ribonuclease PH.